Consider the following 185-residue polypeptide: Prenylated Rab acceptor protein 1 (185 aa).

The Cytoplasmic portion of the chain corresponds to 1-78 (MAAQKDQQKD…RNVEYYQSNY (78 aa)). The segment at 30 to 54 (AGREWLERRRATIRPWGTFVDQQRF) is required for interaction with prenylated RAB3A and VAMP2. 2 helical membrane passes run 79-94 (VFVF…VTSP) and 95-112 (MLLV…ILYL). Topologically, residues 113-131 (RTLQSKLVLFGREVSPAHQ) are cytoplasmic. 2 helical membrane-spanning segments follow: residues 132–148 (YALA…LAGA) and 149–165 (GSAV…LIGS). The tract at residues 165–185 (SHAAFHQIEPADGEELQMEPV) is required for interaction with GDI1. At 166–185 (HAAFHQIEPADGEELQMEPV) the chain is on the cytoplasmic side. Residues 175–185 (ADGEELQMEPV) form a required for interaction with prenylated RAB3A and VAMP2 region. The homodimerization stretch occupies residues 175 to 185 (ADGEELQMEPV).

The protein belongs to the PRA1 family. Homodimers. Interacts specifically with both prenylated Rab proteins (including RAB3A and RAB1), and VAMP2 (synaptobrevin-2), in an exclusive way. Interacts with NDRG1. Interacts with free GDI1 in the absence of Rab proteins. Also interacts with PCLO. As to expression, ubiquitous.

Its subcellular location is the cell membrane. The protein localises to the cytoplasm. It localises to the golgi apparatus. It is found in the cytoplasmic vesicle. The protein resides in the secretory vesicle. Its subcellular location is the synaptic vesicle. Functionally, general Rab protein regulator required for vesicle formation from the Golgi complex. May control vesicle docking and fusion by mediating the action of Rab GTPases to the SNARE complexes. In addition it inhibits the removal of Rab GTPases from the membrane by GDI1. The chain is Prenylated Rab acceptor protein 1 (Rabac1) from Rattus norvegicus (Rat).